Reading from the N-terminus, the 236-residue chain is Thiol:disulfide interchange protein DsbC (236 aa).

The first 20 residues, 1–20 (MKKGFMLFTLLAAFSGFAQA), serve as a signal peptide directing secretion. The region spanning 36–231 (SSDIQPAPVA…MKEFLDEHQK (196 aa)) is the Thioredoxin domain. Cystine bridges form between Cys-118-Cys-121 and Cys-161-Cys-183.

Belongs to the thioredoxin family. DsbC subfamily. In terms of assembly, homodimer.

It is found in the periplasm. Functionally, required for disulfide bond formation in some periplasmic proteins. Acts by transferring its disulfide bond to other proteins and is reduced in the process. DsbC is reoxidized by a yet uncharacterized protein. Also acts as a disulfide isomerase. The sequence is that of Thiol:disulfide interchange protein DsbC (dsbC) from Escherichia coli O157:H7.